Consider the following 360-residue polypeptide: Ankyrin repeat domain-containing protein 2 (360 aa).

The may mediate interaction with PML, p53/TP53 and YBX1 stretch occupies residues 5-120 (PSWAGVGALA…GIQNLIELRK (116 aa)). A Phosphoserine; by PKB/AKT2 modification is found at Ser99. Residues 126–147 (KRDALAASHEPPPEPEEITGPV) form a disordered region. Residues 138–147 (PEPEEITGPV) show a composition bias toward acidic residues. 5 ANK repeats span residues 147–176 (VDEETFLKAAVEGKMKVIEKFLADGGSADT), 180–209 (FRRTALHRASLEGHMEILEKLLDNGATVDF), 213–242 (LDCTAMHWACRGGHLEVVKLLQSHGADTNV), 246–275 (LLSTPLHVAVRTGQVEIVEHFLSLGLEINA), and 279–308 (EGDTALHDAVRLNRYKIIKLLLLHGADMMT). Positions 330 to 342 (ALEHPEPGAEHNG) are enriched in basic and acidic residues. The tract at residues 330–360 (ALEHPEPGAEHNGLEGPNDSGRETPQPVPAQ) is disordered.

As to quaternary structure, interacts with ID3; both proteins cooperate in myoblast differentiation. Interacts with TTN/titin. Interacts (via ANK repeats) with TCAP; the interaction is direct. Interacts with TJP1 (via PDZ domains). Interacts with PML; the interaction is direct. Interacts with p53/TP53. Interacts with YBX1. Interacts with AKT2. In terms of processing, phosphorylation at Ser-99 by PKB/AKT2 in response to oxidative stress induces translocation to the nucleus and negatively regulates myoblast differentiation. In terms of tissue distribution, mostly expressed in skeletal and cardiac muscles. Found in slow fibers. Also expressed in kidney, but to a lower extent (at protein level).

The protein resides in the cytoplasm. It localises to the myofibril. Its subcellular location is the sarcomere. It is found in the i band. The protein localises to the cytosol. The protein resides in the nucleus. It localises to the PML body. Functions as a negative regulator of myocyte differentiation. May interact with both sarcoplasmic structural proteins and nuclear proteins to regulate gene expression during muscle development and in response to muscle stress. The protein is Ankyrin repeat domain-containing protein 2 (ANKRD2) of Homo sapiens (Human).